The chain runs to 249 residues: MIT domain-containing protein 1 (249 aa).

The MIT domain maps to 8–86 (QDPQSTAAAT…KYLDQEKEDG (79 aa)). The segment at 168 to 231 (RGLQEIEESL…SLGYCDFDLR (64 aa)) is important for association with membranes.

Homodimer. Interacts (via MIT domain) with CHMP1A, CHMP1B, CHMP2A and IST1.

The protein resides in the late endosome membrane. It localises to the midbody. It is found in the membrane. In terms of biological role, required for efficient abscission at the end of cytokinesis, together with components of the ESCRT-III complex. This is MIT domain-containing protein 1 (MITD1) from Homo sapiens (Human).